We begin with the raw amino-acid sequence, 773 residues long: Protein FAM149A (773 aa).

2 stretches are compositionally biased toward low complexity: residues 18–37 (TSTA…AAAA) and 54–90 (LLRA…AAGA). Disordered regions lie at residues 18 to 155 (TSTA…RELG), 173 to 210 (DIGE…DSLP), 232 to 264 (FSSS…TERG), and 568 to 613 (TQNE…PWRL). Residues 174–186 (IGEEGASDGDSGD) show a composition bias toward acidic residues. Residues 245 to 264 (TSWSGSATQSSTTGSSTERG) show a composition bias toward low complexity.

This sequence belongs to the FAM149 family.

In Homo sapiens (Human), this protein is Protein FAM149A (FAM149A).